A 351-amino-acid polypeptide reads, in one-letter code: Dihydroorotate dehydrogenase (quinone) (351 aa).

FMN contacts are provided by residues 61 to 65 (AGLDK) and Thr85. Position 65 (Lys65) interacts with substrate. 110 to 114 (NRMGF) provides a ligand contact to substrate. 2 residues coordinate FMN: Asn139 and Asn172. A substrate-binding site is contributed by Asn172. Ser175 functions as the Nucleophile in the catalytic mechanism. Asn177 is a substrate binding site. FMN is bound by residues Lys217 and Thr245. 246-247 (NT) provides a ligand contact to substrate. Residues Gly268, Gly297, and 318 to 319 (YS) each bind FMN.

This sequence belongs to the dihydroorotate dehydrogenase family. Type 2 subfamily. As to quaternary structure, monomer. The cofactor is FMN.

Its subcellular location is the cell membrane. The enzyme catalyses (S)-dihydroorotate + a quinone = orotate + a quinol. It participates in pyrimidine metabolism; UMP biosynthesis via de novo pathway; orotate from (S)-dihydroorotate (quinone route): step 1/1. Its function is as follows. Catalyzes the conversion of dihydroorotate to orotate with quinone as electron acceptor. This Stenotrophomonas maltophilia (strain K279a) protein is Dihydroorotate dehydrogenase (quinone).